Reading from the N-terminus, the 35-residue chain is Dermonecrotic toxin LdSicTox-alpha-1 (35 aa).

Residue histidine 11 is part of the active site. 2 residues coordinate Mg(2+): glutamate 31 and aspartate 33.

The protein belongs to the arthropod phospholipase D family. Class I subfamily. Requires Mg(2+) as cofactor. In terms of processing, contains 1 disulfide bond. Expressed by the venom gland.

It is found in the secreted. The enzyme catalyses an N-(acyl)-sphingosylphosphocholine = an N-(acyl)-sphingosyl-1,3-cyclic phosphate + choline. It catalyses the reaction an N-(acyl)-sphingosylphosphoethanolamine = an N-(acyl)-sphingosyl-1,3-cyclic phosphate + ethanolamine. The catalysed reaction is a 1-acyl-sn-glycero-3-phosphocholine = a 1-acyl-sn-glycero-2,3-cyclic phosphate + choline. It carries out the reaction a 1-acyl-sn-glycero-3-phosphoethanolamine = a 1-acyl-sn-glycero-2,3-cyclic phosphate + ethanolamine. In terms of biological role, dermonecrotic toxins cleave the phosphodiester linkage between the phosphate and headgroup of certain phospholipids (sphingolipid and lysolipid substrates), forming an alcohol (often choline) and a cyclic phosphate. This toxin acts on sphingomyelin (SM). It may also act on ceramide phosphoethanolamine (CPE), lysophosphatidylcholine (LPC) and lysophosphatidylethanolamine (LPE), but not on lysophosphatidylserine (LPS), and lysophosphatidylglycerol (LPG). It acts by transphosphatidylation, releasing exclusively cyclic phosphate products as second products. Induces dermonecrosis, hemolysis, increased vascular permeability, edema, inflammatory response, and platelet aggregation. This is Dermonecrotic toxin LdSicTox-alpha-1 from Loxosceles deserta (Desert recluse spider).